Consider the following 1784-residue polypeptide: Histone acetyltransferase KAT6B (1784 aa).

One can recognise an SAMD1-like winged helix (WH) domain in the interval 1–77; that stretch reads MVKLANPLYT…LASYKDPDNP (77 aa). Residues 72–98 form a disordered region; sequence KDPDNPGRFSSVKPGTFPKSTKESRGS. An H15 domain is found at 103 to 176; sequence RNVDWNKLLR…KDGPQYRVNY (74 aa). PHD-type zinc fingers lie at residues 213–272 and 269–320; these read IPIC…CKTC and CKTC…CRPK. S355 is modified (phosphoserine). The negatively regulates HAT activity stretch occupies residues 361–425; the sequence is GSMNAFTGRG…ECESGVEDCG (65 aa). Residue K381 forms a Glycyl lysine isopeptide (Lys-Gly) (interchain with G-Cter in SUMO2) linkage. Positions 423–697 constitute an MYST-type HAT domain; that stretch reads DCGRYPSVIE…LDPDSLRWTP (275 aa). A catalytic region spans residues 426-716; the sequence is RYPSVIEFGK…EEEREAEKEA (291 aa). A C2HC MYST-type zinc finger spans residues 456–481; sequence LYLCEFCLKYMKSKNILLRHSKKCGW. The tract at residues 460-716 is interaction with BRPF1; that stretch reads EFCLKYMKSK…EEEREAEKEA (257 aa). Position 523 is an N6-acetyllysine; by autocatalysis (K523). Acetyl-CoA-binding positions include 564 to 568 and 573 to 579; these read SCIMI and QRQGFGR. Residue E599 is the Proton donor/acceptor of the active site. S603 provides a ligand contact to acetyl-CoA. Disordered regions lie at residues 730–884, 904–1163, 1195–1273, and 1291–1330; these read EQEV…RPMP, RKAF…FKEV, SCNS…FQDC, and QSPQIATTLDDCQQSDHSSPVSSVHSHPGQSVRSVNSPSV. Over residues 733–751 the composition is skewed to polar residues; that stretch reads VLSTRANSRQSPAKVQSKN. An N6-acetyllysine mark is found at K746, K750, and K752. Phosphoserine is present on S756. Residues 777-819 are compositionally biased toward acidic residues; sequence SEEEEEEEEDEEEEDEEEEEEEEEDEEEEEEEEEEEEEEEEEN. Over residues 820-831 the composition is skewed to polar residues; the sequence is IQSSPPRLTKPQ. The segment covering 835-854 has biased composition (basic residues); it reads IKRKRPFVLKKKRGRKRRRI. The span at 856 to 869 shows a compositional bias: low complexity; that stretch reads SSVTTETISETTEV. Over residues 904-914 the composition is skewed to basic residues; sequence RKAFQHQPGKK. 2 stretches are compositionally biased toward basic and acidic residues: residues 938 to 957 and 1055 to 1064; these read MNDDSRNLKEGSKDNPEPLK and EKPEDDLIKP. Over residues 1065–1087 the composition is skewed to acidic residues; the sequence is EEEEEEEEEEEEEEGEEEEEEGG. Composition is skewed to basic and acidic residues over residues 1088 to 1101 and 1107 to 1118; these read NVEKDPDGAKSQEK and SPEKEDSARLDD. Acidic residues predominate over residues 1119–1128; it reads HEEEEEEDEE. Positions 1144-1163 are enriched in basic and acidic residues; the sequence is HMESAEVEKEELPRESFKEV. The span at 1209-1218 shows a compositional bias: acidic residues; sequence AVPESDEEPP. Positions 1224 to 1240 are enriched in basic and acidic residues; it reads QKQDQKNSKEVDTEFKE. Polar residues-rich tracts occupy residues 1251–1263 and 1291–1302; these read ETVQAVQSLTQES and QSPQIATTLDDC. Positions 1271–1784 are interaction with RUNX1 and RUNX2; it reads QDCAETQEAC…QSLNGSYMRR (514 aa). Positions 1305 to 1322 are enriched in low complexity; the sequence is SDHSSPVSSVHSHPGQSV.

It belongs to the MYST (SAS/MOZ) family. In terms of assembly, component of the MOZ/MORF complex composed at least of ING5, KAT6A, KAT6B, MEAF6 and one of BRPF1, BRD1/BRPF2 and BRPF3. Interacts with RUNX1 and RUNX2. In terms of processing, autoacetylation at Lys-523 is required for proper function.

Its subcellular location is the nucleus. It catalyses the reaction L-lysyl-[protein] + acetyl-CoA = N(6)-acetyl-L-lysyl-[protein] + CoA + H(+). Histone acetyltransferase which may be involved in both positive and negative regulation of transcription. Required for RUNX2-dependent transcriptional activation. May be involved in cerebral cortex development. Component of the MOZ/MORF complex which has a histone H3 acetyltransferase activity. The chain is Histone acetyltransferase KAT6B (KAT6B) from Macaca fascicularis (Crab-eating macaque).